The sequence spans 353 residues: Uroporphyrinogen decarboxylase (353 aa).

Substrate-binding positions include 29–33 (RQAGR), Asp78, Tyr154, Ser209, and His322.

Belongs to the uroporphyrinogen decarboxylase family. In terms of assembly, homodimer.

The protein localises to the cytoplasm. It carries out the reaction uroporphyrinogen III + 4 H(+) = coproporphyrinogen III + 4 CO2. It participates in porphyrin-containing compound metabolism; protoporphyrin-IX biosynthesis; coproporphyrinogen-III from 5-aminolevulinate: step 4/4. Functionally, catalyzes the decarboxylation of four acetate groups of uroporphyrinogen-III to yield coproporphyrinogen-III. This chain is Uroporphyrinogen decarboxylase, found in Bacillus velezensis (strain DSM 23117 / BGSC 10A6 / LMG 26770 / FZB42) (Bacillus amyloliquefaciens subsp. plantarum).